Here is a 488-residue protein sequence, read N- to C-terminus: Transmembrane protein 39A (488 aa).

N-linked (GlcNAc...) asparagine glycans are attached at residues Asn-31 and Asn-39. 3 helical membrane-spanning segments follow: residues 72-92 (GLLF…IQYI), 110-130 (TSLN…VMLA), and 155-175 (LITA…WTLV). A glycan (N-linked (GlcNAc...) asparagine) is linked at Asn-180. 5 helical membrane passes run 182–202 (SVLN…LCCF), 287–307 (EVLF…LCFV), 319–339 (CEHL…QLLP), 420–440 (LLNL…YSLL), and 446–466 (NHTL…FKLL).

This sequence belongs to the TMEM39 family.

The protein resides in the endoplasmic reticulum membrane. Its function is as follows. Regulates autophagy by controlling the spatial distribution and levels of the intracellular phosphatidylinositol 4-phosphate (PtdIns(4)P) pools. Modulates (PtdIns(4)P) levels by regulating the ER-to-Golgi trafficking of the phosphatidylinositide phosphatase SACM1L. The polypeptide is Transmembrane protein 39A (tmem39a) (Xenopus tropicalis (Western clawed frog)).